The following is a 2148-amino-acid chain: Polyketide synthase 1 (2148 aa).

The N-terminal acylcarrier protein transacylase domain (SAT) stretch occupies residues 19-261; it reads FIFGDQSSCN…TPLAVHAPYH (243 aa). Positions 394 to 829 constitute a Ketosynthase family 3 (KS3) domain; the sequence is ESKIAIIGMS…GGNTALLVED (436 aa). Catalysis depends on for beta-ketoacyl synthase activity residues Cys-566, His-701, and His-745. The tract at residues 929–1233 is malonyl-CoA:ACP transacylase (MAT) domain; the sequence is AFVFSGQGSQ…PSLMRNKDGW (305 aa). Residue Ser-1018 is the For acyl/malonyl transferase activity of the active site. The product template (PT) domain stretch occupies residues 1310–1624; it reads TASVHRIVHE…RKVLNTAMPP (315 aa). Positions 1314–1447 are N-terminal hotdog fold; the sequence is HRIVHESVEK…SSLHFEQPKV (134 aa). The PKS/mFAS DH domain maps to 1314–1619; that stretch reads HRIVHESVEK…FQGIPRKVLN (306 aa). His-1346 acts as the Proton acceptor; for dehydratase activity in catalysis. A C-terminal hotdog fold region spans residues 1474–1619; the sequence is LNSRMSSGVI…FQGIPRKVLN (146 aa). Residue Asp-1533 is the Proton donor; for dehydratase activity of the active site. Positions 1619–1655 are disordered; the sequence is NTAMPPPKSQNEAPVRSGPAKPAAKPPRSASSEHSGH. Low complexity predominate over residues 1634-1650; sequence RSGPAKPAAKPPRSASS. The Carrier 1 domain occupies 1678-1752; that stretch reads RNPMLPVFKI…DLAAHLGLDT (75 aa). Residue Ser-1712 is modified to O-(pantetheine 4'-phosphoryl)serine. 2 stretches are compositionally biased toward low complexity: residues 1757–1769 and 1779–1796; these read QSSGQSSSFGGLS and TSSVTTPPSLSPRSSVSG. The tract at residues 1757–1796 is disordered; that stretch reads QSSGQSSSFGGLSPRSDSIGEITSSVTTPPSLSPRSSVSG. Positions 1793 to 1870 constitute a Carrier 2 domain; it reads SVSGSQCKDV…SFKHMFQQGH (78 aa). An O-(pantetheine 4'-phosphoryl)serine modification is found at Ser-1830. Positions 1882 to 2146 are thioesterase (TE) domain; that stretch reads LKQYRATSTL…ERVAAFIRST (265 aa). Ser-1973 serves as the catalytic For thioesterase activity.

In terms of biological role, polyketide synthase; part of the Pks1 gene cluster that mediates the biosynthesis of an anthraquinone derivative pigment that contributes to conidial pigmentation that provides protection from UV radiation, heat and cold stress. The polyketide synthase Pks1 produces 1-acetyl-2,4,6,8-tetrahydroxy-9,10-anthraquinone though condensation of acetyl-CoA with malonyl-CoA. The dehydratase EthD and the laccase Mlac1 further convert the anthraquinone derivative into the final conidial pigment. The polypeptide is Polyketide synthase 1 (Metarhizium anisopliae (strain ARSEF 549)).